Here is a 349-residue protein sequence, read N- to C-terminus: Gibberellin 3-beta-dioxygenase 3 (349 aa).

The Fe2OG dioxygenase domain maps to 201–305 (SIQSFLQLNS…RVSAAYFAGP (105 aa)). The Fe cation site is built by H226, D228, and H286. R296 is a catalytic residue.

This sequence belongs to the iron/ascorbate-dependent oxidoreductase family. GA3OX subfamily. It depends on L-ascorbate as a cofactor. Requires Fe cation as cofactor. Expressed in flower clusters and siliques.

It catalyses the reaction gibberellin A20 + 2-oxoglutarate + O2 = gibberellin A1 + succinate + CO2. Its pathway is plant hormone biosynthesis; gibberellin biosynthesis. Converts the inactive gibberellin (GA) precursors GA9 and GA20 in the bioactives gibberellins GA4 and GA1. Involved in the production of bioactive GA for reproductive development. The chain is Gibberellin 3-beta-dioxygenase 3 (GA3OX3) from Arabidopsis thaliana (Mouse-ear cress).